A 530-amino-acid chain; its full sequence is Phosphoenolpyruvate carboxykinase (ATP) 2 (530 aa).

Arg54, Tyr191, and Lys197 together coordinate substrate. ATP is bound by residues Lys197, His216, and 232-240 (GLSGTGKTT). Lys197 and His216 together coordinate Mn(2+). Residue Asp253 coordinates Mn(2+). Residues Glu281, Arg318, 437-438 (RV), and Thr443 each bind ATP. Arg318 is a substrate binding site.

Belongs to the phosphoenolpyruvate carboxykinase (ATP) family. The cofactor is Mn(2+).

It localises to the cytoplasm. The catalysed reaction is oxaloacetate + ATP = phosphoenolpyruvate + ADP + CO2. It participates in carbohydrate biosynthesis; gluconeogenesis. Functionally, involved in the gluconeogenesis. Catalyzes the conversion of oxaloacetate (OAA) to phosphoenolpyruvate (PEP) through direct phosphoryl transfer between the nucleoside triphosphate and OAA. The sequence is that of Phosphoenolpyruvate carboxykinase (ATP) 2 from Salinibacter ruber (strain DSM 13855 / M31).